Consider the following 539-residue polypeptide: MAAAASELLTGWFLFGLALLAILIFSWVYVRKYQSRRESEVISTVTAIFALAVALISSALLPVDIFLVSYMKNQNGTFKDWADANVSRQIEDTVLYGYYTLYSIILFCVFLWIPFVYFYYEEKEEDDGNTCSQVKTALKYTLGFITVCAVLLLIGAFVPLDIPNKKNSTEWEKVKLLFEEFGSSHGLTALSFSISSLTVIGMLAAITYTAYGMSALPLNLIKGTTSAAYERLENTEDIEEVEQRILRIKSKCRDGRPLSSRDRRAVQQLEERLRTLRRRERHLETIEKSWWLKFCEAIRPLKIVWGVFFIIVALLFTVSLFLSNLDKALHSAGFDSGFIILGTNLTNPLNMLLPVLQTVFPLDYILITTIVMYFIFTSMAGIRNMGIWFFWIRLYKIRRGKTRPQALLFLCMILLLIVLHTSYMIYSLAPQYVMYGSQKYLVQSNKTIDGQPKNVTTFVAKDCDADAPEDQCIVTRTYLFLHKFWFFSAVYYFGNWAFIAVFLIGLIVSCCKGKKSVIEGEVDEDDSDMSDDELSAYYC.

Topologically, residues 1 to 7 are extracellular; that stretch reads MAAAASE. The chain crosses the membrane as a helical span at residues 8 to 28; the sequence is LLTGWFLFGLALLAILIFSWV. Over 29 to 47 the chain is Cytoplasmic; that stretch reads YVRKYQSRRESEVISTVTA. A helical membrane pass occupies residues 48 to 68; that stretch reads IFALAVALISSALLPVDIFLV. Topologically, residues 69 to 97 are extracellular; the sequence is SYMKNQNGTFKDWADANVSRQIEDTVLYG. N-linked (GlcNAc...) asparagine glycosylation is found at N75 and N85. Residues 98 to 118 form a helical membrane-spanning segment; sequence YYTLYSIILFCVFLWIPFVYF. The Cytoplasmic portion of the chain corresponds to 119 to 141; that stretch reads YYEEKEEDDGNTCSQVKTALKYT. The chain crosses the membrane as a helical span at residues 142–162; it reads LGFITVCAVLLLIGAFVPLDI. Residues 163–185 are Extracellular-facing; the sequence is PNKKNSTEWEKVKLLFEEFGSSH. An N-linked (GlcNAc...) asparagine glycan is attached at N167. The chain crosses the membrane as a helical span at residues 186–206; sequence GLTALSFSISSLTVIGMLAAI. The Cytoplasmic segment spans residues 207–302; that stretch reads TYTAYGMSAL…KFCEAIRPLK (96 aa). A helical membrane pass occupies residues 303-323; that stretch reads IVWGVFFIIVALLFTVSLFLS. Topologically, residues 324-361 are extracellular; that stretch reads NLDKALHSAGFDSGFIILGTNLTNPLNMLLPVLQTVFP. N344 carries an N-linked (GlcNAc...) asparagine glycan. A helical membrane pass occupies residues 362-382; that stretch reads LDYILITTIVMYFIFTSMAGI. Residues 383–405 are Cytoplasmic-facing; that stretch reads RNMGIWFFWIRLYKIRRGKTRPQ. Residues 406–426 traverse the membrane as a helical segment; it reads ALLFLCMILLLIVLHTSYMIY. Residues 427–483 are Extracellular-facing; sequence SLAPQYVMYGSQKYLVQSNKTIDGQPKNVTTFVAKDCDADAPEDQCIVTRTYLFLHK. N445 and N454 each carry an N-linked (GlcNAc...) asparagine glycan. Residues 484–504 traverse the membrane as a helical segment; it reads FWFFSAVYYFGNWAFIAVFLI. At 505–539 the chain is on the cytoplasmic side; the sequence is GLIVSCCKGKKSVIEGEVDEDDSDMSDDELSAYYC.

The protein belongs to the LIMR family. LMBRD1 subfamily.

The protein localises to the endoplasmic reticulum membrane. The protein resides in the lysosome membrane. Its subcellular location is the cell membrane. Functionally, lysosomal membrane chaperone required to export cobalamin (vitamin B12) from the lysosome to the cytosol, allowing its conversion to cofactors. Targets ABCD4 transporter from the endoplasmic reticulum to the lysosome. Then forms a complex with lysosomal ABCD4 and cytoplasmic MMACHC to transport cobalamin across the lysosomal membrane. May play a role in mediating and regulating the internalization of the insulin receptor. The protein is Lysosomal cobalamin transport escort protein LMBD1 (LMBRD1) of Gallus gallus (Chicken).